Consider the following 312-residue polypeptide: 26S proteasome non-ATPase regulatory subunit 14 (312 aa).

One can recognise an MPN domain in the interval 33 to 168 (VYISSLALLK…IDAFRTINPQ (136 aa)). Zn(2+)-binding residues include His-115, His-117, and Asp-128. The short motif at 115 to 128 (HSHPGFGCWLSGVD) is the JAMM motif element.

This sequence belongs to the peptidase M67A family. PSMD14 subfamily. In terms of assembly, component of the 19S regulatory cap of the 26S proteasome.

Metalloprotease component of the 26S proteasome that specifically cleaves 'Lys-63'-linked polyubiquitin chains. The 26S proteasome is involved in the ATP-dependent degradation of ubiquitinated proteins. The function of the 'Lys-63'-specific deubiquitination of the proteasome is unclear. In Caenorhabditis elegans, this protein is 26S proteasome non-ATPase regulatory subunit 14 (rpn-11).